The primary structure comprises 161 residues: C-type natriuretic peptide (161 aa).

A signal peptide spans 1–22 (MFASRLAALGLLLLALVLDGKP). The segment at 19-135 (DGKPAPPPQP…GGGGSRRLKG (117 aa)) is disordered. Residues 23–139 (APPPQPLRKA…SRRLKGLPKK (117 aa)) constitute a propeptide that is removed on maturation. Composition is skewed to low complexity over residues 29–60 (LRKA…SSGP) and 76–93 (AAPT…AASR). Basic and acidic residues predominate over residues 94-104 (LLRDLRPDGKQ). A compositionally biased stretch (gly residues) spans 120 to 130 (GGGGGGGGGGS). An intrachain disulfide couples Cys-145 to Cys-161.

It belongs to the natriuretic peptide family. In terms of tissue distribution, expressed by the venom gland.

It localises to the secreted. In terms of biological role, snake venom natriuretic peptide that has a vasorelaxant activity in rat aortic strips and a diuretic potency in anesthetized rats. May act by activating natriuretic receptors (NPR1 and/or NPR2). This Rhabdophis tigrinus tigrinus (Tiger keelback snake) protein is C-type natriuretic peptide.